A 125-amino-acid chain; its full sequence is Small ribosomal subunit protein bS16 (125 aa).

The interval 87 to 125 (EGKKKQALARQSASKKAVKEKTEESKGSEVDSETSTSAD) is disordered. The segment covering 103–115 (AVKEKTEESKGSE) has biased composition (basic and acidic residues).

Belongs to the bacterial ribosomal protein bS16 family.

In Prochlorococcus marinus (strain MIT 9211), this protein is Small ribosomal subunit protein bS16.